The following is a 188-amino-acid chain: dCTP deaminase (188 aa).

DCTP is bound by residues 111 to 116 (KSTYAR), 135 to 137 (TLE), glutamine 156, tyrosine 170, lysine 179, and glutamine 180. The Proton donor/acceptor role is filled by glutamate 137.

Belongs to the dCTP deaminase family. In terms of assembly, homotrimer.

It catalyses the reaction dCTP + H2O + H(+) = dUTP + NH4(+). The protein operates within pyrimidine metabolism; dUMP biosynthesis; dUMP from dCTP (dUTP route): step 1/2. Catalyzes the deamination of dCTP to dUTP. The chain is dCTP deaminase from Rickettsia bellii (strain OSU 85-389).